The primary structure comprises 247 residues: Mannose-specific lectin CML-2 (247 aa).

2 residues coordinate a carbohydrate: Asp-87 and Gly-107. The N-linked (GlcNAc...) asparagine glycan is linked to Asn-119. Mn(2+) contacts are provided by Glu-129 and Asp-131. Residues Asp-131 and Phe-133 each contribute to the Ca(2+) site. A carbohydrate is bound by residues Ser-138 and Asn-139. Ca(2+) contacts are provided by Asn-139 and Asp-142. Mn(2+) is bound by residues Asp-142 and His-147. Gly-221, Glu-222, and Gln-223 together coordinate a carbohydrate.

This sequence belongs to the leguminous lectin family. In terms of assembly, homodimer; non-covalently linked. Glycosylated.

Functionally, mannose-specific lectin. Also binds alpha-methyl-D-mannoside, D-glucose, N-acetyl-D-glucosamine and sucrose but not D-galactose, D-arabinose, D-fructose, D-xylose, lactose or glycoproteins fetiun, PSM and ovalbumin. Shows agglutinating activity towards rabbit erythrocytes. The polypeptide is Mannose-specific lectin CML-2 (Centrolobium microchaete (Canarywood tree)).